Consider the following 90-residue polypeptide: Elongation factor 1-beta (90 aa).

Belongs to the EF-1-beta/EF-1-delta family.

Functionally, promotes the exchange of GDP for GTP in EF-1-alpha/GDP, thus allowing the regeneration of EF-1-alpha/GTP that could then be used to form the ternary complex EF-1-alpha/GTP/AAtRNA. This is Elongation factor 1-beta from Staphylothermus marinus (strain ATCC 43588 / DSM 3639 / JCM 9404 / F1).